A 428-amino-acid chain; its full sequence is 3-phosphoshikimate 1-carboxyvinyltransferase (428 aa).

The 3-phosphoshikimate site is built by Lys-21, Ser-22, and Arg-26. Lys-21 contributes to the phosphoenolpyruvate binding site. Phosphoenolpyruvate contacts are provided by Gly-93 and Arg-121. 3-phosphoshikimate-binding residues include Ser-166, Gln-168, Asp-314, and Lys-341. Gln-168 is a phosphoenolpyruvate binding site. Catalysis depends on Asp-314, which acts as the Proton acceptor. The phosphoenolpyruvate site is built by Arg-345 and Arg-388.

It belongs to the EPSP synthase family. In terms of assembly, monomer.

It is found in the cytoplasm. The enzyme catalyses 3-phosphoshikimate + phosphoenolpyruvate = 5-O-(1-carboxyvinyl)-3-phosphoshikimate + phosphate. Its pathway is metabolic intermediate biosynthesis; chorismate biosynthesis; chorismate from D-erythrose 4-phosphate and phosphoenolpyruvate: step 6/7. Its function is as follows. Catalyzes the transfer of the enolpyruvyl moiety of phosphoenolpyruvate (PEP) to the 5-hydroxyl of shikimate-3-phosphate (S3P) to produce enolpyruvyl shikimate-3-phosphate and inorganic phosphate. The sequence is that of 3-phosphoshikimate 1-carboxyvinyltransferase from Syntrophomonas wolfei subsp. wolfei (strain DSM 2245B / Goettingen).